The sequence spans 296 residues: Methylsterol monooxygenase 1 (296 aa).

The next 2 helical transmembrane spans lie at 55-75 and 100-120; these read LLVHEASYFLLCVPGFIFQFI and TLIFNHFFIQLPLICGTYYFT. In terms of domain architecture, Fatty acid hydroxylase spans 145-274; sequence CAVIEDAWHY…FTWWDRIFGT (130 aa). A Histidine box-1 motif is present at residues 157-161; sequence HRLLH. A Histidine box-2 motif is present at residues 170-174; it reads HKVHH. Residues 199–219 traverse the membrane as a helical segment; it reads FFIGIVVFCNHVVLLWAWVIC. Residues 249-255 carry the Histidine box-3 motif; sequence FHDFHHM.

It belongs to the sterol desaturase family. Fe cation is required as a cofactor.

It localises to the endoplasmic reticulum membrane. It carries out the reaction 4,4-dimethyl-5alpha-cholest-7-en-3beta-ol + 6 Fe(II)-[cytochrome b5] + 3 O2 + 5 H(+) = 4alpha-carboxy-4beta-methyl-5alpha-cholest-7-ene-3beta-ol + 6 Fe(III)-[cytochrome b5] + 4 H2O. Its pathway is steroid biosynthesis; zymosterol biosynthesis; zymosterol from lanosterol: step 3/6. Catalyzes the first step in the removal of the two C-4 methyl groups of 4,4-dimethylzymosterol. This Gallus gallus (Chicken) protein is Methylsterol monooxygenase 1 (MSMO1).